Reading from the N-terminus, the 450-residue chain is UDP-N-acetylmuramoylalanine--D-glutamate ligase (450 aa).

Residue 119–125 participates in ATP binding; that stretch reads GSNGKTT.

The protein belongs to the MurCDEF family.

It localises to the cytoplasm. It catalyses the reaction UDP-N-acetyl-alpha-D-muramoyl-L-alanine + D-glutamate + ATP = UDP-N-acetyl-alpha-D-muramoyl-L-alanyl-D-glutamate + ADP + phosphate + H(+). It participates in cell wall biogenesis; peptidoglycan biosynthesis. In terms of biological role, cell wall formation. Catalyzes the addition of glutamate to the nucleotide precursor UDP-N-acetylmuramoyl-L-alanine (UMA). The protein is UDP-N-acetylmuramoylalanine--D-glutamate ligase of Streptococcus pneumoniae serotype 4 (strain ATCC BAA-334 / TIGR4).